We begin with the raw amino-acid sequence, 85 residues long: Large ribosomal subunit protein bL27 (85 aa).

The segment at 1–20 (MAHKKAGGSTRNGRDSESKR) is disordered.

Belongs to the bacterial ribosomal protein bL27 family.

This Azotobacter vinelandii (strain DJ / ATCC BAA-1303) protein is Large ribosomal subunit protein bL27.